The chain runs to 232 residues: Large ribosomal subunit protein uL1 (232 aa).

The protein belongs to the universal ribosomal protein uL1 family. Part of the 50S ribosomal subunit.

Functionally, binds directly to 23S rRNA. The L1 stalk is quite mobile in the ribosome, and is involved in E site tRNA release. Its function is as follows. Protein L1 is also a translational repressor protein, it controls the translation of the L11 operon by binding to its mRNA. This Azorhizobium caulinodans (strain ATCC 43989 / DSM 5975 / JCM 20966 / LMG 6465 / NBRC 14845 / NCIMB 13405 / ORS 571) protein is Large ribosomal subunit protein uL1.